We begin with the raw amino-acid sequence, 283 residues long: Thymidylate synthase (283 aa).

Residue Arg22 participates in dUMP binding. The active-site Nucleophile is the Cys160. DUMP-binding positions include 180 to 183, Asn191, and 221 to 223; these read RSCD and HIY. Asp183 serves as a coordination point for (6R)-5,10-methylene-5,6,7,8-tetrahydrofolate. Ser282 contributes to the (6R)-5,10-methylene-5,6,7,8-tetrahydrofolate binding site.

Belongs to the thymidylate synthase family. Bacterial-type ThyA subfamily. Homodimer.

The protein resides in the cytoplasm. The enzyme catalyses dUMP + (6R)-5,10-methylene-5,6,7,8-tetrahydrofolate = 7,8-dihydrofolate + dTMP. Its pathway is pyrimidine metabolism; dTTP biosynthesis. Catalyzes the reductive methylation of 2'-deoxyuridine-5'-monophosphate (dUMP) to 2'-deoxythymidine-5'-monophosphate (dTMP) while utilizing 5,10-methylenetetrahydrofolate (mTHF) as the methyl donor and reductant in the reaction, yielding dihydrofolate (DHF) as a by-product. This enzymatic reaction provides an intracellular de novo source of dTMP, an essential precursor for DNA biosynthesis. The chain is Thymidylate synthase from Mannheimia succiniciproducens (strain KCTC 0769BP / MBEL55E).